A 418-amino-acid polypeptide reads, in one-letter code: Histidine--tRNA ligase (418 aa).

It belongs to the class-II aminoacyl-tRNA synthetase family. In terms of assembly, homodimer.

It is found in the cytoplasm. The catalysed reaction is tRNA(His) + L-histidine + ATP = L-histidyl-tRNA(His) + AMP + diphosphate + H(+). The protein is Histidine--tRNA ligase of Thermosipho africanus (strain TCF52B).